The following is a 177-amino-acid chain: Protein SOB FIVE-LIKE 6 (177 aa).

The short motif at Ser14–Tyr19 is the SOFL-A element. Disordered regions lie at residues Glu37 to Cys60 and Lys78 to Ser104. The SOFL-B motif lies at Ser47–Pro56. Positions Ser79–Lys90 are enriched in basic residues.

It belongs to the SOFL plant protein family. Expressed in seedlings, flowers and siliques. Barely detectable in roots and leaves.

It localises to the cytoplasm. The protein resides in the nucleus. In terms of biological role, involved in cytokinin-mediated development. This Arabidopsis thaliana (Mouse-ear cress) protein is Protein SOB FIVE-LIKE 6.